The chain runs to 171 residues: Putative RING finger protein 027R (171 aa).

An RING-type zinc finger spans residues 121 to 163 (CAVCMTNPVWVDFVWSCKHISTCIKCLKMLSRGSNGFKCPICR).

Belongs to the IIV-6 157L family.

In Aedes vexans (Inland floodwater mosquito), this protein is Putative RING finger protein 027R.